The sequence spans 457 residues: Transmembrane protein 143 (457 aa).

2 helical membrane-spanning segments follow: residues 264-284 (ILNV…GMVV) and 285-305 (LSDL…FMGL). Phosphoserine is present on Ser316. A compositionally biased stretch (polar residues) spans 429-439 (LSSPKSAPSDD). The segment at 429–457 (LSSPKSAPSDDNSLEKPLGPAQPSHLVGN) is disordered.

The protein resides in the membrane. This is Transmembrane protein 143 (TMEM143) from Bos taurus (Bovine).